Reading from the N-terminus, the 362-residue chain is Innexin inx1 (362 aa).

Topologically, residues 1–28 (MYKLLGSLKSYLKWQDIQTDNAVFRLHN) are cytoplasmic. Residues 29–49 (SFTTVLLLTCSLIITATQYVG) traverse the membrane as a helical segment. Over 50–110 (QPISCIVNGV…DAKKYYTYYQ (61 aa)) the chain is Extracellular. A helical membrane pass occupies residues 111–131 (WVCFVLFFQAMACYTPKFLWN). Residues 132–177 (KFEGGLMRMIVMGLNITICTREEKEAKRDALLDYLIKHVKRHKLYA) are Cytoplasmic-facing. Residues 178 to 198 (IRYWACEFLCCINIIVQMYLM) form a helical membrane-spanning segment. Residues 199-267 (NRFFDGEFLS…LPLNIVNEKT (69 aa)) lie on the Extracellular side of the membrane. A helical membrane pass occupies residues 268 to 288 (YVFIWFWFWILLVLLIGLIVF). Residues 289 to 362 (RGCIIFMPKF…VEPSKHDRAK (74 aa)) are Cytoplasmic-facing.

Belongs to the pannexin family. Heterooligomer of Inx2 and ogre. As to expression, in ovary, expressed in follicle cells. Expressed around the periphery of the embryo during cellular blastoderm formation. Repeating epidermal pattern emerges from stage 11, high levels of expression detected along the borders of each segment from stage 13. At stage 13, expressed in the dorsal branch of the tracheal system. During stage 15, detected in a few cells at each of the branch points of the dorsal trunk and at low levels in cardioblasts. In embryos, also expressed in the salivary gland and the hindgut (at protein level). At stage 17, expressed in the dorsal side of the CNS. Expressed in the imaginal wing disk. Expressed in larval CNS and in tissues outside of the CNS. In pupae, expressed in the CNS and in primary, secondary and tertiary pigment cells of the retina.

Its subcellular location is the cell membrane. It is found in the cell junction. It localises to the gap junction. The protein localises to the basolateral cell membrane. Structural component of the gap junctions. Essential for generation and/or maintenance of postembryonic neuroblasts and normal development of optic lobe. The chain is Innexin inx1 (ogre) from Drosophila melanogaster (Fruit fly).